Here is a 155-residue protein sequence, read N- to C-terminus: NADPH-dependent 7-cyano-7-deazaguanine reductase (155 aa).

Cysteine 53 (thioimide intermediate) is an active-site residue. The active-site Proton donor is aspartate 60. Substrate contacts are provided by residues 75–77 (VES) and 94–95 (HE).

Belongs to the GTP cyclohydrolase I family. QueF type 1 subfamily.

The protein resides in the cytoplasm. The catalysed reaction is 7-aminomethyl-7-carbaguanine + 2 NADP(+) = 7-cyano-7-deazaguanine + 2 NADPH + 3 H(+). Its pathway is tRNA modification; tRNA-queuosine biosynthesis. In terms of biological role, catalyzes the NADPH-dependent reduction of 7-cyano-7-deazaguanine (preQ0) to 7-aminomethyl-7-deazaguanine (preQ1). In Hyphomonas neptunium (strain ATCC 15444), this protein is NADPH-dependent 7-cyano-7-deazaguanine reductase.